Consider the following 272-residue polypeptide: NH(3)-dependent NAD(+) synthetase (272 aa).

Tyr33 is a deamido-NAD(+) binding site. ATP contacts are provided by residues 45–52, Arg79, and Gln85; that span reads GISGGQDS. Asp51 is a binding site for Mg(2+). A deamido-NAD(+)-binding site is contributed by Arg138. Thr158 is a binding site for ATP. Glu163 lines the Mg(2+) pocket. Deamido-NAD(+) is bound by residues Lys171 and Asp178. Positions 187 and 209 each coordinate ATP. Deamido-NAD(+) is bound by residues Glu224 and 258–259; that span reads HK.

It belongs to the NAD synthetase family. In terms of assembly, homodimer. In terms of processing, phosphorylated during sporulation.

The enzyme catalyses deamido-NAD(+) + NH4(+) + ATP = AMP + diphosphate + NAD(+) + H(+). It functions in the pathway cofactor biosynthesis; NAD(+) biosynthesis; NAD(+) from deamido-NAD(+) (ammonia route): step 1/1. In terms of biological role, catalyzes the ATP-dependent amidation of deamido-NAD to form NAD. Uses ammonia as a nitrogen source. This chain is NH(3)-dependent NAD(+) synthetase, found in Bacillus subtilis (strain 168).